The following is a 125-amino-acid chain: Cystatin-like cysteine protease inhibitor EPIC2B (125 aa).

An N-terminal signal peptide occupies residues 1 to 21 (MSFLRPTLALLAVTALVTTSA). N-linked (GlcNAc...) asparagine glycosylation is present at N45. Residues 68-72 (QVVSG) carry the Secondary area of contact motif.

Belongs to the cystatin family. In terms of assembly, interacts with the host papain-like cysteine protease PIP1. Interacts with the host papain-like cysteine protease RCR3. Interacts with the host papain-like cysteine protease C14.

The protein localises to the secreted. Its function is as follows. Secreted effector that interacts with and inhibits the pathogenesis-related papain-like cysteine proteases C14, PIP1 and RCR3 of host plants. Inhibition of host proteases by a pathogen extracellular protease inhibitor forms a specific type of defense-counterdefense mechanism between plants and microbial pathogens. The polypeptide is Cystatin-like cysteine protease inhibitor EPIC2B (Phytophthora infestans (strain T30-4) (Potato late blight agent)).